The chain runs to 157 residues: Endoribonuclease YbeY (157 aa).

Positions 121, 125, and 131 each coordinate Zn(2+).

Belongs to the endoribonuclease YbeY family. The cofactor is Zn(2+).

It localises to the cytoplasm. Single strand-specific metallo-endoribonuclease involved in late-stage 70S ribosome quality control and in maturation of the 3' terminus of the 16S rRNA. In Salinispora tropica (strain ATCC BAA-916 / DSM 44818 / JCM 13857 / NBRC 105044 / CNB-440), this protein is Endoribonuclease YbeY.